A 366-amino-acid chain; its full sequence is 3-dehydroquinate synthase (366 aa).

NAD(+) is bound by residues 69–74, 103–107, 127–128, Lys-140, Lys-149, and 167–170; these read DGEAHK, GVIGD, TT, and TLNT. Positions 182, 245, and 262 each coordinate Zn(2+).

It belongs to the sugar phosphate cyclases superfamily. Dehydroquinate synthase family. It depends on Co(2+) as a cofactor. The cofactor is Zn(2+). Requires NAD(+) as cofactor.

Its subcellular location is the cytoplasm. It catalyses the reaction 7-phospho-2-dehydro-3-deoxy-D-arabino-heptonate = 3-dehydroquinate + phosphate. It participates in metabolic intermediate biosynthesis; chorismate biosynthesis; chorismate from D-erythrose 4-phosphate and phosphoenolpyruvate: step 2/7. In terms of biological role, catalyzes the conversion of 3-deoxy-D-arabino-heptulosonate 7-phosphate (DAHP) to dehydroquinate (DHQ). This Pseudomonas fluorescens (strain SBW25) protein is 3-dehydroquinate synthase.